The primary structure comprises 64 residues: MTKGTPSQGKHNKGSNHIVCRRCGRRAFHVRKKVCAACGFGKSSKIKRFAWQWKKVTGKGNRVK.

4 residues coordinate Zn(2+): Cys-20, Cys-23, Cys-35, and Cys-38. The C4-type zinc-finger motif lies at 20–38 (CRRCGRRAFHVRKKVCAAC).

Belongs to the eukaryotic ribosomal protein eL37 family. Zn(2+) is required as a cofactor.

In terms of biological role, binds to the 23S rRNA. The chain is Large ribosomal subunit protein eL37 from Methanococcus maripaludis (strain C6 / ATCC BAA-1332).